A 1215-amino-acid chain; its full sequence is Chromosome segregation protein sudA (1215 aa).

32-39 (GRNGSGKS) is an ATP binding site. Residues 177–522 (KIMHETNSKR…LSQMMDHNTS (346 aa)) are a coiled coil. The disordered stretch occupies residues 313–332 (SDNQAAAQESKARHDESLKA). An SMC hinge domain is found at 538–650 (EGVYGTLAEL…PNLQVASQYA (113 aa)). The interval 654–676 (GVNATTPEGDRSDKRGALTGGFH) is disordered. Residues 684–1091 (DAVKNLAKWR…EEAKHSVENY (408 aa)) adopt a coiled-coil conformation.

Belongs to the SMC family. SMC3 subfamily.

Its subcellular location is the nucleus. Involved in chromosome segregation in mitosis. The chain is Chromosome segregation protein sudA (sudA) from Emericella nidulans (strain FGSC A4 / ATCC 38163 / CBS 112.46 / NRRL 194 / M139) (Aspergillus nidulans).